The following is a 1584-amino-acid chain: MAVATRLPFIPPEATSQIIGGDEDLIDLSQEDVVSDNDDRGNASDVESEDGVKRWTVNPEPKPKKISAKKLADTAAFNSWIEEHQETLARDQRKAAIEAARVAGVDVLPAIGFDSERIITSPREYQVELFERAKQQNTIAVLDTGSGKTLIAAMLLRWVITGELEDREKGLPRRIAFFLVDKVALVFQQHSFLTKNLDFPMEKLCGEMVEGVESKAFWKEALEQNEVVVCTAEILSTALHHSWIRMDQINLLIFDEAHHTKKDHPYARIIKNFYIDEQLERRPRILGLTASPVDAKVDPRRAAAELEALLHSQIATAADPAALQHTICKPKTELVVEYVRGRPDSETVLNKQLRKLVGGQELFKKPLNFTTSAASKLGTWCADRYWQLFFKQEDIVKLESRTERDLMKVAALDEITEKHVKQVREAHELVNAHTFSPAALDPTMLSSKVIMLVRILRDQFERGVGAQRCIIFVRQRNTAMLLADLLQQPEIKSHIPSIAAEVLVGGGTTGSSYVNAKINFQQQNRIIRKFKLGEINCLFATSVAEEGLDIPDCNIVIRFDLYDTLIQCIQSRGRARRPDSRYIQMIEKGNYEHHSRILRAKGAEDVLRKFCEALPEDRKLTGNHMNLDYLLRKEKGKRQYTVPDTGAKLSYMQSLVCLANFTATLPHPPETSLSPEYYITTVPGGFQCEVVMPDASPIKSAVGKVHLSKGVAKCAAAFELCLALLKAGHLDNHLQSVFTKQLPEMRNARLAVSSKKKTEYAMRLKPELWSVRGVVTQLFATAFVLENPDTLGRSSRPLLLLSRSALPEVASFPLFFGTKRFSKVRCVPIPGSVQADDTLVEQLTRFTLKAFMDVFSKEYEATAVNLPYFLSPMDGGHGFDFRLAKSPAHLIDRKALAYVSENEKVPYTFLEPDDFFQDKFVVDPYDGARKFFTHHRRHDMKPTDPVPDGIVAPNHRAWRGLGTTHDILNYSNSLWSKSRGFMIFQADQPVVEAALISTRRDFLDDTLRDEDVEPQQCFLILEPMRISPIPADVVAMLLCFPSIIHRVESNLVALDACKLLGLDLRPDLALEAFTKDSDNSDEHDAEKENFQTGMGDNYERLEFLGDSFLKMATTIAIYTLIPDKGEFEYHVERMLLICNKNLFNNALEIGLEEYIRSMSFNRRQWYPEGLILKKGKSKDARQRHVLADKSIADVCEALIGAAYLTGQEKGSFDMAIKAVTAMVKDKKHRMISYGDYYAVYQKPTWQTESANSAQRDMAKKFSERMGYKFKHPRLLRAAFQHPTYPSLYERLPSYQRLEFLGDALFDMVAVDYLFRKFPAADPQWLTEHKMAMVSNQFLCCLSFHLGFNKCIATMSPSILKDIAEYVTEIEEALETAKQEAINAGKTADEYSRDYWVHITHASRLPKCLSDVVEAYIGAIFVDSEYDYSVVQNFFNMHVLPFFEDMHLYDTFANKHPVTFVANMMAHKFRCNEWRSFAKELDTDVTEGRGGRGGNGAVAGEISEINPPKVVSALLVHGKTVVHAVAASGRYAKSAMAKKAIKLLEGMSVEEFRERLGCNCKGVPMEVDGGVPEADVDGEVHGTAV.

Residues 31 to 60 form a disordered region; it reads EDVVSDNDDRGNASDVESEDGVKRWTVNPE. The 182-residue stretch at 129–310 folds into the Helicase ATP-binding domain; that stretch reads LFERAKQQNT…RAAAELEALL (182 aa). 142 to 149 is a binding site for ATP; the sequence is LDTGSGKT. Residues 255-258 carry the DEAH box motif; the sequence is DEAH. One can recognise a Helicase C-terminal domain in the interval 448–621; it reads KVIMLVRILR…EALPEDRKLT (174 aa). A Dicer dsRNA-binding fold domain is found at 654 to 744; it reads SLVCLANFTA…QSVFTKQLPE (91 aa). The PAZ domain occupies 894 to 1028; it reads KALAYVSENE…LILEPMRISP (135 aa). 2 consecutive RNase III domains span residues 1052–1207 and 1258–1424; these read VALD…LTGQ and AKKF…VDSE. Mg(2+)-binding residues include Glu1298, Asp1410, and Glu1413. In terms of domain architecture, DRBM spans 1458–1545; it reads TFVANMMAHK…AKKAIKLLEG (88 aa). The Zn(2+) site is built by Cys1470, His1516, Cys1557, and Cys1559.

It belongs to the helicase family. Dicer subfamily. Mg(2+) is required as a cofactor. The cofactor is Mn(2+).

In terms of biological role, dicer-like endonuclease involved in cleaving double-stranded RNA in the RNA interference (RNAi) pathway. Produces 21 to 25 bp dsRNAs (siRNAs) which target the selective destruction of homologous RNAs leading to sequence-specific suppression of gene expression, called post-transcriptional gene silencing (PTGS). Part of a broad host defense response against viral infection and transposons. Controls the expression of the non-LTR retrotransposon Tad in the African strain, Adiomopoume. This Neurospora crassa (strain ATCC 24698 / 74-OR23-1A / CBS 708.71 / DSM 1257 / FGSC 987) protein is Dicer-like protein 1 (dcl-1).